A 267-amino-acid chain; its full sequence is Tryptophan synthase alpha chain (267 aa).

Residues E47 and D58 each act as proton acceptor in the active site.

This sequence belongs to the TrpA family. As to quaternary structure, tetramer of two alpha and two beta chains.

It catalyses the reaction (1S,2R)-1-C-(indol-3-yl)glycerol 3-phosphate + L-serine = D-glyceraldehyde 3-phosphate + L-tryptophan + H2O. The protein operates within amino-acid biosynthesis; L-tryptophan biosynthesis; L-tryptophan from chorismate: step 5/5. In terms of biological role, the alpha subunit is responsible for the aldol cleavage of indoleglycerol phosphate to indole and glyceraldehyde 3-phosphate. The polypeptide is Tryptophan synthase alpha chain (Chlorobium phaeobacteroides (strain DSM 266 / SMG 266 / 2430)).